We begin with the raw amino-acid sequence, 373 residues long: Protodeoxyviolaceinate monooxygenase (373 aa).

Residue 2 to 20 (KILVIGAGPAGLVFASQLK) participates in FAD binding.

FAD is required as a cofactor.

The catalysed reaction is protodeoxyviolaceinate + NADH + O2 + H(+) = protoviolaceinate + NAD(+) + H2O. The enzyme catalyses protodeoxyviolaceinate + NADPH + O2 + H(+) = protoviolaceinate + NADP(+) + H2O. The protein operates within pigment biosynthesis; violacein biosynthesis. Catalyzes the oxygenation of the 6-position of protodeoxyviolaceinate to form proviolacein. This Chromobacterium violaceum (strain ATCC 12472 / DSM 30191 / JCM 1249 / CCUG 213 / NBRC 12614 / NCIMB 9131 / NCTC 9757 / MK) protein is Protodeoxyviolaceinate monooxygenase (vioD).